A 734-amino-acid polypeptide reads, in one-letter code: Platelet glycoprotein Ib alpha chain (734 aa).

The signal sequence occupies residues 1–16 (MALLILLFLLPSPLHS). The LRRNT domain maps to 17-47 (QHTCSISKVTSLLEVNCENKKLTALPADLPA). The Extracellular portion of the chain corresponds to 17 to 612 (QHTCSISKVT…LNSDFCCFLP (596 aa)). A disulfide bond links Cys20 and Cys33. LRR repeat units follow at residues 48-69 (DTGI…SLVH), 72-93 (HLTY…GKLI), 94-115 (KLEN…GWAL), 117-140 (ALTT…DGLS), 141-162 (QLQE…LLLP), 165-188 (KLKK…DGLE), and 189-210 (DLDT…FFGT). In terms of domain architecture, LRRCT spans 221 to 282 (NSWYCDCEIL…YSYPGKGCPT (62 aa)). 2 cysteine pairs are disulfide-bonded: Cys225-Cys264 and Cys227-Cys280. Tyr292 carries the post-translational modification Sulfotyrosine. Thr301, Thr311, Thr315, and Thr316 each carry an O-linked (GalNAc...) threonine glycan. An O-linked (GalNAc...) serine glycan is attached at Ser335. O-linked (GalNAc...) threonine glycans are attached at residues Thr339, Thr348, Thr358, and Thr377. Ser382 is a glycosylation site (O-linked (GalNAc...) serine). Thr384, Thr385, and Thr405 each carry an O-linked (GalNAc...) threonine glycan. Disordered regions lie at residues 406 to 429 (STLT…TPEH) and 460 to 526 (EPST…PEPS). 8 O-linked (GalNAc...) threonine glycosylation sites follow: Thr512, Thr516, Thr519, Thr530, Thr542, Thr546, Thr550, and Thr562. Residue Ser572 is glycosylated (O-linked (GalNAc...) serine). O-linked (GalNAc...) threonine glycosylation occurs at Thr573. The helical transmembrane segment at 613-633 (LGFYVLGLLWLLFASVVLILL) threads the bilayer. Over 634–734 (LTWTWHVTPH…VGIRYSGHSL (101 aa)) the chain is Cytoplasmic. Phosphoserine occurs at positions 711 and 714.

In terms of assembly, two GP-Ib beta are disulfide-linked to one GP-Ib alpha. GP-IX is complexed with the GP-Ib heterodimer via a non covalent linkage. Interacts with FLNB. Interacts with FLNA (via filamin repeats 4, 9, 12, 17, 19, 21, and 23). In terms of processing, O-glycosylated. Glycocalicin is the product of a proteolytic cleavage/shedding, catalyzed by ADAM17, which releases most of the extracellular domain. Binding sites for vWF and thrombin are in this part of the protein.

The protein resides in the membrane. Functionally, GP-Ib, a surface membrane protein of platelets, participates in the formation of platelet plugs by binding to the A1 domain of vWF, which is already bound to the subendothelium. The polypeptide is Platelet glycoprotein Ib alpha chain (Gp1ba) (Mus musculus (Mouse)).